Consider the following 473-residue polypeptide: NAD-dependent protein deacetylase SRT1 (473 aa).

The 241-residue stretch at 27 to 267 folds into the Deacetylase sirtuin-type domain; it reads SHLLQCKIEE…AGVMESLNMK (241 aa). NAD(+) contacts are provided by residues 52 to 71 and 114 to 117; these read GAGISTSCGIPDFRGPKGIW and QNVD. Histidine 134 functions as the Proton acceptor in the catalytic mechanism. Residues cysteine 142, cysteine 145, cysteine 167, and cysteine 172 each contribute to the Zn(2+) site. Residues 209–211, 235–237, and valine 253 contribute to the NAD(+) site; these read GTS and NLQ. Residues 447 to 473 are disordered; it reads LEGSGTSRKRSRTGKRKSKALAEETKA. The segment covering 453-465 has biased composition (basic residues); the sequence is SRKRSRTGKRKSK.

It belongs to the sirtuin family. Class IV subfamily. Binds to the promoter region of genes influenced by ethylene. Interacts with ENAP1; this interaction is enhanced in the presence of ethylene. It depends on Zn(2+) as a cofactor.

The protein localises to the nucleus. It catalyses the reaction N(6)-acetyl-L-lysyl-[protein] + NAD(+) + H2O = 2''-O-acetyl-ADP-D-ribose + nicotinamide + L-lysyl-[protein]. Functionally, NAD-dependent protein deacetylase. Has deacetylase activity towards H3K9Ac. May have a function in the safeguard against genome instability and DNA damage to ensure plant cell growth. Involved in responses to ethylene leading to the transcriptional repression of some ethylene-responsive genes via the regulation of histone acetylation H3K9Ac. The sequence is that of NAD-dependent protein deacetylase SRT1 from Arabidopsis thaliana (Mouse-ear cress).